We begin with the raw amino-acid sequence, 197 residues long: Imidazoleglycerol-phosphate dehydratase (197 aa).

This sequence belongs to the imidazoleglycerol-phosphate dehydratase family.

The protein localises to the cytoplasm. It carries out the reaction D-erythro-1-(imidazol-4-yl)glycerol 3-phosphate = 3-(imidazol-4-yl)-2-oxopropyl phosphate + H2O. It functions in the pathway amino-acid biosynthesis; L-histidine biosynthesis; L-histidine from 5-phospho-alpha-D-ribose 1-diphosphate: step 6/9. The polypeptide is Imidazoleglycerol-phosphate dehydratase (Methanocaldococcus jannaschii (strain ATCC 43067 / DSM 2661 / JAL-1 / JCM 10045 / NBRC 100440) (Methanococcus jannaschii)).